The primary structure comprises 165 residues: MMRCCRRRCCCRQPPHALRPLLLLPLVLLPPLAAAAAGPNRCDTIYQGFAECLIRLGDSMGRGGELETICRSWNDFHACASQVLSGCPEEAAAVWESLQQEARQAPRPNNLHTLCGAPVHVRERGTGSETNQETLRATAPALPMAPAPPLLAAALALAYLLRPLA.

Residues 1 to 35 (MMRCCRRRCCCRQPPHALRPLLLLPLVLLPPLAAA) form the signal peptide. A lipid anchor (GPI-anchor amidated alanine) is attached at Ala-139. Residues 140 to 165 (PALPMAPAPPLLAAALALAYLLRPLA) constitute a propeptide, removed in mature form.

This sequence belongs to the neuritin family.

The protein localises to the cell membrane. The sequence is that of Neuritin-like protein (NRN1L) from Homo sapiens (Human).